We begin with the raw amino-acid sequence, 121 residues long: Small ribosomal subunit protein uS13 (121 aa).

The tract at residues 91–121 (HRRGLPVRGQKTKNNARTRKGPVKTVANKKK) is disordered.

It belongs to the universal ribosomal protein uS13 family. As to quaternary structure, part of the 30S ribosomal subunit. Forms a loose heterodimer with protein S19. Forms two bridges to the 50S subunit in the 70S ribosome.

In terms of biological role, located at the top of the head of the 30S subunit, it contacts several helices of the 16S rRNA. In the 70S ribosome it contacts the 23S rRNA (bridge B1a) and protein L5 of the 50S subunit (bridge B1b), connecting the 2 subunits; these bridges are implicated in subunit movement. Contacts the tRNAs in the A and P-sites. In Staphylococcus carnosus (strain TM300), this protein is Small ribosomal subunit protein uS13.